A 98-amino-acid chain; its full sequence is DNA-binding protein Fis (98 aa).

The segment at residues 74 to 93 (QTRAATMMGINRGTLRKKLK) is a DNA-binding region (H-T-H motif).

The protein belongs to the transcriptional regulatory Fis family. In terms of assembly, homodimer.

Activates ribosomal RNA transcription. Plays a direct role in upstream activation of rRNA promoters. The protein is DNA-binding protein Fis of Vibrio parahaemolyticus serotype O3:K6 (strain RIMD 2210633).